We begin with the raw amino-acid sequence, 266 residues long: Early E1A protein (266 aa).

Residues 39-47 (MSLHEMYDL) are interaction with RB1 in competition with E2F1. The PXLXP motif, interaction with host ZMYND11 signature appears at 94–98 (PELQP). An LXCXE motif, interaction with host RB1 motif is present at residues 103-107 (LFCYE). A zinc finger spans residues 160–180 (CSSCDYHRKTSGCPEILCSLC). The segment at 193–244 (VSDSEPDEPDSTTADSNHGSPPTLRCTPPRDLPRPVPVKASPGKRPAVNSLH) is disordered. Residues 203 to 212 (STTADSNHGS) show a composition bias toward polar residues. The PXDLS motif, CTBP-binding signature appears at 255–259 (PLDLS). The short motif at 261–265 (KRSRS) is the Nuclear localization signal element.

It belongs to the adenoviridae E1A protein family. As to quaternary structure, interacts with host UBE2I; this interaction interferes with polySUMOylation. Interacts with host RB1; this interaction induces the aberrant dissociation of RB1-E2F1 complex thereby disrupting the activity of RB1 and activating E2F1-regulated genes. Interacts with host ATF7; the interaction enhances ATF7-mediated viral transactivation activity which requires the zinc binding domains of both proteins. Isoform early E1A 32 kDa protein and isoform early E1A 26 kDa protein interact (via N-terminus) with CUL1 and E3 ubiquitin ligase RBX1; these interactions inhibit RBX1-CUL1-dependent elongation reaction of ubiquitin chains and attenuate ubiquitination of SCF(FBXW7) target proteins. Interacts (via PXLXP motif) with host ZMYND11/BS69 (via MYND-type zinc finger); this interaction inhibits E1A mediated transactivation. Interacts with host EP300; this interaction stimulates the acetylation of RB1 by recruiting EP300 and RB1 into a multimeric-protein complex. Interacts with host CTBP1 and CTBP2; this interaction seems to potentiate viral replication. Interacts with host DCAF7. Interacts with host DYRK1A. Interacts with host KPNA4; this interaction allows E1A import into the host nucleus. Interacts with host EP400; this interaction stabilizes MYC. Interacts with host TBP protein; this interaction probably disrupts the TBP-TATA complex.

It localises to the host nucleus. Its function is as follows. Plays a role in viral genome replication by driving entry of quiescent cells into the cell cycle. Stimulation of progression from G1 to S phase allows the virus to efficiently use the cellular DNA replicating machinery to achieve viral genome replication. E1A protein has both transforming and trans-activating activities. Induces the disassembly of the E2F1 transcription factor from RB1 by direct competition for the same binding site on RB1, with subsequent transcriptional activation of E2F1-regulated S-phase genes and of the E2 region of the adenoviral genome. Release of E2F1 leads to the ARF-mediated inhibition of MDM2 and causes TP53/p53 to accumulate because it is not targeted for degradation by MDM2-mediated ubiquitination anymore. This increase in TP53, in turn, would arrest the cell proliferation and direct its death but this effect is counteracted by the viral protein E1B-55K. Inactivation of the ability of RB1 to arrest the cell cycle is critical for cellular transformation, uncontrolled cellular growth and proliferation induced by viral infection. Interaction with RBX1 and CUL1 inhibits ubiquitination of the proteins targeted by SCF(FBXW7) ubiquitin ligase complex, and may be linked to unregulated host cell proliferation. The tumorigenesis-restraining activity of E1A may be related to the disruption of the host CtBP-CtIP complex through the CtBP binding motif. The protein is Early E1A protein of Simian adenovirus serotype 7 (SAdV-7).